The sequence spans 70 residues: Small ribosomal subunit protein bS21 (70 aa).

The protein belongs to the bacterial ribosomal protein bS21 family.

This chain is Small ribosomal subunit protein bS21, found in Polaromonas naphthalenivorans (strain CJ2).